The following is a 388-amino-acid chain: F-box protein At4g00893 (388 aa).

Positions 1-30 (MLPSPSVHMASPPPSLNMASHPPSPATASR) are disordered. One can recognise an F-box domain in the interval 42-88 (NPSFADLPSSLIEEIMLLLVLKDNIRASAACKSWYEAGVSVRVVDKH).

This chain is F-box protein At4g00893, found in Arabidopsis thaliana (Mouse-ear cress).